Consider the following 165-residue polypeptide: Chorismate pyruvate-lyase (165 aa).

4 residues coordinate substrate: methionine 35, arginine 77, leucine 115, and glutamate 156.

This sequence belongs to the UbiC family. Monomer.

The protein localises to the cytoplasm. It carries out the reaction chorismate = 4-hydroxybenzoate + pyruvate. The protein operates within cofactor biosynthesis; ubiquinone biosynthesis. In terms of biological role, removes the pyruvyl group from chorismate, with concomitant aromatization of the ring, to provide 4-hydroxybenzoate (4HB) for the ubiquinone pathway. The chain is Chorismate pyruvate-lyase from Salmonella arizonae (strain ATCC BAA-731 / CDC346-86 / RSK2980).